The sequence spans 339 residues: tRNA N6-adenosine threonylcarbamoyltransferase (339 aa).

Residues histidine 111 and histidine 115 each coordinate Fe cation. Substrate contacts are provided by residues 139–143, aspartate 172, glycine 185, aspartate 189, and asparagine 280; that span reads LVSGG. A Fe cation-binding site is contributed by aspartate 308.

This sequence belongs to the KAE1 / TsaD family. Fe(2+) is required as a cofactor.

It localises to the cytoplasm. The catalysed reaction is L-threonylcarbamoyladenylate + adenosine(37) in tRNA = N(6)-L-threonylcarbamoyladenosine(37) in tRNA + AMP + H(+). In terms of biological role, required for the formation of a threonylcarbamoyl group on adenosine at position 37 (t(6)A37) in tRNAs that read codons beginning with adenine. Is involved in the transfer of the threonylcarbamoyl moiety of threonylcarbamoyl-AMP (TC-AMP) to the N6 group of A37, together with TsaE and TsaB. TsaD likely plays a direct catalytic role in this reaction. The chain is tRNA N6-adenosine threonylcarbamoyltransferase from Bacteroides thetaiotaomicron (strain ATCC 29148 / DSM 2079 / JCM 5827 / CCUG 10774 / NCTC 10582 / VPI-5482 / E50).